Here is a 532-residue protein sequence, read N- to C-terminus: Bifunctional purine biosynthesis protein PurH (532 aa).

One can recognise an MGS-like domain in the interval Met-1 to Val-147.

This sequence belongs to the PurH family.

It carries out the reaction (6R)-10-formyltetrahydrofolate + 5-amino-1-(5-phospho-beta-D-ribosyl)imidazole-4-carboxamide = 5-formamido-1-(5-phospho-D-ribosyl)imidazole-4-carboxamide + (6S)-5,6,7,8-tetrahydrofolate. The enzyme catalyses IMP + H2O = 5-formamido-1-(5-phospho-D-ribosyl)imidazole-4-carboxamide. The protein operates within purine metabolism; IMP biosynthesis via de novo pathway; 5-formamido-1-(5-phospho-D-ribosyl)imidazole-4-carboxamide from 5-amino-1-(5-phospho-D-ribosyl)imidazole-4-carboxamide (10-formyl THF route): step 1/1. It functions in the pathway purine metabolism; IMP biosynthesis via de novo pathway; IMP from 5-formamido-1-(5-phospho-D-ribosyl)imidazole-4-carboxamide: step 1/1. This chain is Bifunctional purine biosynthesis protein PurH, found in Haemophilus influenzae (strain ATCC 51907 / DSM 11121 / KW20 / Rd).